A 178-amino-acid polypeptide reads, in one-letter code: Ribulose bisphosphate carboxylase small subunit, chloroplastic (178 aa).

A chloroplast-targeting transit peptide spans 1–55; that stretch reads MASSMMVSTAAVSRTSPAQSNMVVPFAGLHSSAAFPVTRKFADSSKLPSNGLRVR.

This sequence belongs to the RuBisCO small chain family. As to quaternary structure, heterohexadecamer of 8 large and 8 small subunits.

It localises to the plastid. The protein resides in the chloroplast. RuBisCO catalyzes two reactions: the carboxylation of D-ribulose 1,5-bisphosphate, the primary event in carbon dioxide fixation, as well as the oxidative fragmentation of the pentose substrate. Both reactions occur simultaneously and in competition at the same active site. Although the small subunit is not catalytic it is essential for maximal activity. This Zantedeschia aethiopica (White calla lily) protein is Ribulose bisphosphate carboxylase small subunit, chloroplastic.